The chain runs to 308 residues: Putative S-adenosyl-L-methionine-dependent methyltransferase Mmcs_1045 (308 aa).

Residues D133 and 162 to 163 each bind S-adenosyl-L-methionine; that span reads DL.

Belongs to the UPF0677 family.

Exhibits S-adenosyl-L-methionine-dependent methyltransferase activity. In Mycobacterium sp. (strain MCS), this protein is Putative S-adenosyl-L-methionine-dependent methyltransferase Mmcs_1045.